Consider the following 671-residue polypeptide: Phenol 2-monooxygenase (671 aa).

FAD contacts are provided by residues 10 to 43 (DVLI…RIFD) and 295 to 305 (LQEGRVFLAGD).

This sequence belongs to the PheA/TfdB FAD monooxygenase family. FAD serves as cofactor.

Its subcellular location is the cytoplasm. The enzyme catalyses phenol + NADPH + O2 + H(+) = catechol + NADP(+) + H2O. It participates in aromatic compound metabolism; phenol degradation. Functionally, hydroxylates phenol to catechol. Also acts on cresols. The chain is Phenol 2-monooxygenase (tbuD) from Ralstonia pickettii (Burkholderia pickettii).